The following is a 413-amino-acid chain: MPSSISWGLLLLAGLSCLATGCLIEDSEKSDAPKHDQENSASHKIAPNLAEFAFSLYRVLAHESNTTNIFFSPVSIATALGSLSLGTKADTHTQIMEGVGFNLTEISEAEIHQGFQHLLQNLNKSNSQLQLTTGNGLFIDHNMKLLDKFLEDIKNLYHSEAFSTDFTNTEEAKKQINTYVEKGTQGKIVDLVKDLDRDSGLALVNYIFFKGTLEKPFKADHTMEQDFHVDEATTVRVPMMNRLGMFDLHYCPTLSSMVLKMKYLGDITAIFIMPKVGRMEYVEETLTKEFLDKLLKKDYTGKNTVHFPKLSISGTIDLKPVLTRLGITKVFSHEADLSGITEDAPLRVSQALHKAVLTIDEKGTEAERHTVKGPMALTLAPEVKFNRPFLVTLYDRSTKSPLFVGRVVNPTLH.

A signal peptide spans 1–21 (MPSSISWGLLLLAGLSCLATG). N-linked (GlcNAc...) asparagine glycans are attached at residues Asn65, Asn102, and Asn123. Positions 368 to 387 (RHTVKGPMALTLAPEVKFNR) are RCL.

The protein belongs to the serpin family.

The protein localises to the secreted. In terms of biological role, inhibitor of serine proteases. This Ictidomys tridecemlineatus (Thirteen-lined ground squirrel) protein is Alpha-1-antitrypsin-like protein GS55-LT.